A 341-amino-acid chain; its full sequence is NADH-quinone oxidoreductase subunit H 1 (341 aa).

A run of 8 helical transmembrane segments spans residues 13 to 33 (LVVI…IAYI), 82 to 102 (GLFL…WAVI), 115 to 135 (VGVL…IMAG), 161 to 181 (IGFV…TAIV), 190 to 210 (MLGW…VSAL), 248 to 268 (YVAI…GWLP), 277 to 297 (WVPG…LFAM), and 313 to 333 (LGWK…ASVL).

It belongs to the complex I subunit 1 family. As to quaternary structure, NDH-1 is composed of 14 different subunits. Subunits NuoA, H, J, K, L, M, N constitute the membrane sector of the complex.

It localises to the cell inner membrane. It carries out the reaction a quinone + NADH + 5 H(+)(in) = a quinol + NAD(+) + 4 H(+)(out). NDH-1 shuttles electrons from NADH, via FMN and iron-sulfur (Fe-S) centers, to quinones in the respiratory chain. The immediate electron acceptor for the enzyme in this species is believed to be ubiquinone. Couples the redox reaction to proton translocation (for every two electrons transferred, four hydrogen ions are translocated across the cytoplasmic membrane), and thus conserves the redox energy in a proton gradient. This subunit may bind ubiquinone. The protein is NADH-quinone oxidoreductase subunit H 1 of Rhodopseudomonas palustris (strain ATCC BAA-98 / CGA009).